Reading from the N-terminus, the 237-residue chain is MAKRSKAYLAAAEKVDRTKLYSPLAAARLAKETATTKTDATVEVAVRLGVDPRKADQMVRGTVNLPHGTGKTARVIVFAAGEKAAEAEAAGADAVGAEDLIERIQGGWLDFDAAIATPDQMAKVGRIARVLGPRGLMPNPKTGTVTTDVAKAVSDIKGGKINFRVDKQANLHFVIGKASFDEAKLVENYGAALDEILRAKPSTAKGRYVKKVTVSTNTGPGIPVDPNRTRNLLDEDA.

Belongs to the universal ribosomal protein uL1 family. As to quaternary structure, part of the 50S ribosomal subunit.

Functionally, binds directly to 23S rRNA. The L1 stalk is quite mobile in the ribosome, and is involved in E site tRNA release. In terms of biological role, protein L1 is also a translational repressor protein, it controls the translation of the L11 operon by binding to its mRNA. The polypeptide is Large ribosomal subunit protein uL1 (Nocardia farcinica (strain IFM 10152)).